A 526-amino-acid chain; its full sequence is Nitrogenase iron-iron protein alpha chain (526 aa).

Cysteine 49, cysteine 75, and cysteine 138 together coordinate [8Fe-7S] cluster. Residues cysteine 257 and histidine 423 each contribute to the [8Fe-9S-C-homocitryl] cluster site. Positions 507-526 are disordered; that stretch reads RNQPMPPSRKLRDAVQPAAE.

This sequence belongs to the NifD/NifK/NifE/NifN family. In terms of assembly, hexamer of two alpha, two beta, and two delta chains. It depends on [8Fe-7S] cluster as a cofactor. [8Fe-9S-C-homocitryl] cluster is required as a cofactor.

It carries out the reaction N2 + 8 reduced [2Fe-2S]-[ferredoxin] + 16 ATP + 16 H2O = H2 + 8 oxidized [2Fe-2S]-[ferredoxin] + 2 NH4(+) + 16 ADP + 16 phosphate + 6 H(+). Its function is as follows. This iron-iron protein is part of the nitrogenase complex that catalyzes the key enzymatic reactions in nitrogen fixation. Other nitrogenase complexes utilize a molybdenum-iron protein or a vanadium-iron protein. The polypeptide is Nitrogenase iron-iron protein alpha chain (anfD) (Rhodobacter capsulatus (Rhodopseudomonas capsulata)).